The chain runs to 75 residues: UPF0352 protein ETA_12580 (75 aa).

The protein belongs to the UPF0352 family.

The protein is UPF0352 protein ETA_12580 of Erwinia tasmaniensis (strain DSM 17950 / CFBP 7177 / CIP 109463 / NCPPB 4357 / Et1/99).